A 954-amino-acid polypeptide reads, in one-letter code: Glycine dehydrogenase (decarboxylating) (954 aa).

Position 704 is an N6-(pyridoxal phosphate)lysine (Lys-704).

Belongs to the GcvP family. As to quaternary structure, the glycine cleavage system is composed of four proteins: P, T, L and H. Pyridoxal 5'-phosphate is required as a cofactor.

The catalysed reaction is N(6)-[(R)-lipoyl]-L-lysyl-[glycine-cleavage complex H protein] + glycine + H(+) = N(6)-[(R)-S(8)-aminomethyldihydrolipoyl]-L-lysyl-[glycine-cleavage complex H protein] + CO2. Functionally, the glycine cleavage system catalyzes the degradation of glycine. The P protein binds the alpha-amino group of glycine through its pyridoxal phosphate cofactor; CO(2) is released and the remaining methylamine moiety is then transferred to the lipoamide cofactor of the H protein. This chain is Glycine dehydrogenase (decarboxylating), found in Vibrio cholerae serotype O1 (strain ATCC 39541 / Classical Ogawa 395 / O395).